A 127-amino-acid polypeptide reads, in one-letter code: MNKHHYNRNKHKIPEKVKWISISIFFILSFFINMCFYETQLFIRIFIISCLMLCAIGTMIYTKKGKDILLYIVMSKKEMQKIIWPKYKETLYTTFIVISVTIFISFILWSIDSVIFRLIAFIISLRF.

The next 3 membrane-spanning stretches (helical) occupy residues 17–37, 41–61, and 95–115; these read VKWISISIFFILSFFINMCFY, LFIRIFIISCLMLCAIGTMIY, and FIVISVTIFISFILWSIDSVI.

It belongs to the SecE/SEC61-gamma family. In terms of assembly, component of the Sec protein translocase complex. Heterotrimer consisting of SecY, SecE and SecG subunits. The heterotrimers can form oligomers, although 1 heterotrimer is thought to be able to translocate proteins. Interacts with the ribosome. Interacts with SecDF, and other proteins may be involved. Interacts with SecA.

The protein localises to the cell inner membrane. Essential subunit of the Sec protein translocation channel SecYEG. Clamps together the 2 halves of SecY. May contact the channel plug during translocation. This Buchnera aphidicola subsp. Acyrthosiphon pisum (strain APS) (Acyrthosiphon pisum symbiotic bacterium) protein is Protein translocase subunit SecE.